The primary structure comprises 500 residues: ATP synthase subunit alpha (500 aa).

Residue 169–176 (GDRQTGKT) coordinates ATP.

The protein belongs to the ATPase alpha/beta chains family. In terms of assembly, F-type ATPases have 2 components, CF(1) - the catalytic core - and CF(0) - the membrane proton channel. CF(1) has five subunits: alpha(3), beta(3), gamma(1), delta(1), epsilon(1). CF(0) has three main subunits: a(1), b(2) and c(9-12). The alpha and beta chains form an alternating ring which encloses part of the gamma chain. CF(1) is attached to CF(0) by a central stalk formed by the gamma and epsilon chains, while a peripheral stalk is formed by the delta and b chains.

The protein localises to the cell membrane. It carries out the reaction ATP + H2O + 4 H(+)(in) = ADP + phosphate + 5 H(+)(out). Its function is as follows. Produces ATP from ADP in the presence of a proton gradient across the membrane. The alpha chain is a regulatory subunit. This Lactococcus lactis subsp. cremoris (strain SK11) protein is ATP synthase subunit alpha.